The chain runs to 535 residues: MQLPMLLLVSLPLLLNMFKPAEAQFPRQCATIESLRSGMCCPDYFPVFGPGSDQCGVSTGRGRCVQVTVDSRPHGPQYIHDGRDDREQWPIRFFNQTCRCNGNFSGYNCGSCRPGWTGPTCSQQINIVRRNLLDLSTEERRRFVNALHQAKVTIHPDIVIATRRREEIFGPDGNTPQFENISIYNYFVWSHYYSVRKTFLGAGQQSFERVDFSHEGPAFVTWHRYHLLQLERDMQNMLQDSTFGLPYWNFATGQNTCDICSDDLMGARSNFDVSLISQNSIFSTWRVLCESIEDYDSLGTICNSTEGGPIRRNPAGNVARPMVQRLPEPEDVPQCLEVGIFDTPPFYSNSTDSFRNTVEGYSDPSGKYDPAVRSLHNLAHLFLNGTGGQTHLSPNDPIFVLLHTFTDAVFDEWLRRYSADISTYPLENAPIGHNREYNMVPFWPPVTNNEMFVTAPENLGYSYDIEWPGPLRVTEMITIAIVTALVLVAIIFAAAACIVRAKKNRDELHQPLLTDQYQHYSDDYDGIATPSQSVV.

A signal peptide spans 1–23; sequence MQLPMLLLVSLPLLLNMFKPAEA. Over 24-478 the chain is Lumenal, melanosome; sequence QFPRQCATIE…GPLRVTEMIT (455 aa). 5 cysteine pairs are disulfide-bonded: Cys-29–Cys-40, Cys-41–Cys-64, Cys-55–Cys-98, Cys-100–Cys-109, and Cys-112–Cys-121. Asn-95 and Asn-103 each carry an N-linked (GlcNAc...) asparagine glycan. Residue Asn-180 is glycosylated (N-linked (GlcNAc...) asparagine). Zn(2+) is bound by residues His-191, His-214, and His-223. 2 cysteine pairs are disulfide-bonded: Cys-257-Cys-260 and Cys-289-Cys-302. N-linked (GlcNAc...) asparagine glycosylation is found at Asn-303 and Asn-349. Zn(2+) is bound by residues His-376 and His-380. Asn-384 carries an N-linked (GlcNAc...) asparagine glycan. A Zn(2+)-binding site is contributed by His-403. Residues 479-499 traverse the membrane as a helical segment; that stretch reads IAIVTALVLVAIIFAAAACIV. At 500-535 the chain is on the cytoplasmic side; that stretch reads RAKKNRDELHQPLLTDQYQHYSDDYDGIATPSQSVV.

It belongs to the tyrosinase family. Tyrosinase, TYRP1 and TYRP2 may form a multienzyme complex. It depends on Cu(2+) as a cofactor. Zn(2+) is required as a cofactor.

The protein resides in the melanosome membrane. The enzyme catalyses 2 5,6-dihydroxyindole-2-carboxylate + O2 = 2 indole-5,6-quinone-2-carboxylate + 2 H2O. It functions in the pathway pigment biosynthesis; melanin biosynthesis. Plays a role in melanin biosynthesis. Catalyzes the oxidation of 5,6-dihydroxyindole-2-carboxylic acid (DHICA) into indole-5,6-quinone-2-carboxylic acid. May regulate or influence the type of melanin synthesized. Also to a lower extent, capable of hydroxylating tyrosine and producing melanin. The protein is 5,6-dihydroxyindole-2-carboxylic acid oxidase (TYRP1) of Gallus gallus (Chicken).